A 422-amino-acid polypeptide reads, in one-letter code: MASFPDFVNENEIARSRTIGELITPTSPFEQKYGRENWTVAFAPDGSYFAWSQGHRIVKLVPWSRCLKNFTACSTKNGVNLTNGRLSRQNSDLGQRNKPIEHTIDCGDIVWSLAFGSSVPEKQSRCVNIEWHRFKFGQDQLLLATGLSNGRIKIWDVYTGKLLLNLMDHTEVVRDLTFAPDGSLILVSASRDKTLRVWDLKDDGNMMKVLRGHQNWVYCCAFSPDSSMLCSVGAGKAVFLWDMDKYTMIRKLDGHYNDVVACEFSPDGALLATASYDTRVYVWDPHIGSILFEFGHLFPPPTPIFAGGDNGRWVKSVSFSHDGVHIASLADDNLVRFWRIDKSYPVEVAPLSKGLCCAFSTDGSVLAAGTQDGNAYFWSTPKYVSSLQHLCRMAIRRVMNTNEVKKLPIPQKIMEFLTYQTM.

5 WD repeats span residues 124 to 165 (SRCV…LLLN), 168 to 208 (DHTE…NMMK), 212 to 251 (GHQNWVYCCAFSPDSSMLCSVGAGKAVFLWDMDKYTMIRK), 254 to 293 (GHYNDVVACEFSPDGALLATASYDTRVYVWDPHIGSILFE), and 309 to 346 (DNGRWVKSVSFSHDGVHIASLADDNLVRFWRIDKSYPV). The 49-residue stretch at 374-422 (NAYFWSTPKYVSSLQHLCRMAIRRVMNTNEVKKLPIPQKIMEFLTYQTM) folds into the SOCS box domain.

In terms of assembly, component of a probable ECS E3 ubiquitin-protein ligase complex that contains the Elongin BC complex.

The protein operates within protein modification; protein ubiquitination. Its function is as follows. Probable substrate-recognition component of a SCF-like ECS (Elongin-Cullin-SOCS-box protein) E3 ubiquitin-protein ligase complex which mediates the ubiquitination and subsequent proteasomal degradation of target proteins. The polypeptide is WD repeat and SOCS box-containing protein 1 (wsb1) (Xenopus tropicalis (Western clawed frog)).